Reading from the N-terminus, the 83-residue chain is Apolipoprotein C-I, acidic form (83 aa).

The signal sequence occupies residues methionine 1 to glycine 26.

It belongs to the apolipoprotein C1 family.

The protein resides in the secreted. The sequence is that of Apolipoprotein C-I, acidic form (APOC1A) from Gorilla gorilla gorilla (Western lowland gorilla).